The sequence spans 156 residues: Gene 55 protein (156 aa).

Positions 132–156 (KRRWSGGNASSHEERMRGPFTEVAE) are disordered.

In Mycobacterium phage L5 (Mycobacteriophage L5), this protein is Gene 55 protein (55).